Consider the following 186-residue polypeptide: Glutathione peroxidase 7 (186 aa).

The first 18 residues, 1 to 18 (MVAAVATAWLLLWAAACA), serve as a signal peptide directing secretion. Cysteine 56 is a catalytic residue.

This sequence belongs to the glutathione peroxidase family.

It localises to the secreted. The enzyme catalyses 2 glutathione + H2O2 = glutathione disulfide + 2 H2O. Its function is as follows. It protects esophageal epithelia from hydrogen peroxide-induced oxidative stress. It suppresses acidic bile acid-induced reactive oxygen species (ROS) and protects against oxidative DNA damage and double-strand breaks. In Mus musculus (Mouse), this protein is Glutathione peroxidase 7 (Gpx7).